The primary structure comprises 261 residues: Cytochrome c oxidase subunit 3 (261 aa).

At 1–15 (MTHQSHAYHMVKPSP) the chain is on the mitochondrial matrix side. A helical membrane pass occupies residues 16–34 (WPLTGALSALLMTSGLAMW). Residues 35–40 (FHFYST) are Mitochondrial intermembrane-facing. Residues 41–66 (TLLTLGLLTNTLTMYQWWRDVMREGT) traverse the membrane as a helical segment. Topologically, residues 67–72 (YQGHHT) are mitochondrial matrix. The helical transmembrane segment at 73 to 105 (PPVQKGLRYGMILFITSEVFFFAGFFWAFYHSS) threads the bilayer. Residues 106–128 (LAPTPQLGGHWPPTGITPLNPLE) are Mitochondrial intermembrane-facing. The chain crosses the membrane as a helical span at residues 129–152 (VPLLNTSVLLASGVSITWAHHSLM). Residues 153-155 (ENN) lie on the Mitochondrial matrix side of the membrane. The helical transmembrane segment at 156–183 (RNQMIQALLITILLGLYFTLLQASEYFE) threads the bilayer. Residues 184–190 (SPFTISD) are Mitochondrial intermembrane-facing. A helical membrane pass occupies residues 191-223 (GIYGSTFFVATGFHGLHVIIGSTFLTICLIRQL). The Mitochondrial matrix portion of the chain corresponds to 224-232 (MFHFTSKHH). The chain crosses the membrane as a helical span at residues 233 to 256 (FGFQAAAWYWHFVDVVWLFLYVSI). Residues 257–261 (YWWGS) lie on the Mitochondrial intermembrane side of the membrane.

The protein belongs to the cytochrome c oxidase subunit 3 family. Component of the cytochrome c oxidase (complex IV, CIV), a multisubunit enzyme composed of 14 subunits. The complex is composed of a catalytic core of 3 subunits MT-CO1, MT-CO2 and MT-CO3, encoded in the mitochondrial DNA, and 11 supernumerary subunits COX4I, COX5A, COX5B, COX6A, COX6B, COX6C, COX7A, COX7B, COX7C, COX8 and NDUFA4, which are encoded in the nuclear genome. The complex exists as a monomer or a dimer and forms supercomplexes (SCs) in the inner mitochondrial membrane with NADH-ubiquinone oxidoreductase (complex I, CI) and ubiquinol-cytochrome c oxidoreductase (cytochrome b-c1 complex, complex III, CIII), resulting in different assemblies (supercomplex SCI(1)III(2)IV(1) and megacomplex MCI(2)III(2)IV(2)).

The protein resides in the mitochondrion inner membrane. It carries out the reaction 4 Fe(II)-[cytochrome c] + O2 + 8 H(+)(in) = 4 Fe(III)-[cytochrome c] + 2 H2O + 4 H(+)(out). Its function is as follows. Component of the cytochrome c oxidase, the last enzyme in the mitochondrial electron transport chain which drives oxidative phosphorylation. The respiratory chain contains 3 multisubunit complexes succinate dehydrogenase (complex II, CII), ubiquinol-cytochrome c oxidoreductase (cytochrome b-c1 complex, complex III, CIII) and cytochrome c oxidase (complex IV, CIV), that cooperate to transfer electrons derived from NADH and succinate to molecular oxygen, creating an electrochemical gradient over the inner membrane that drives transmembrane transport and the ATP synthase. Cytochrome c oxidase is the component of the respiratory chain that catalyzes the reduction of oxygen to water. Electrons originating from reduced cytochrome c in the intermembrane space (IMS) are transferred via the dinuclear copper A center (CU(A)) of subunit 2 and heme A of subunit 1 to the active site in subunit 1, a binuclear center (BNC) formed by heme A3 and copper B (CU(B)). The BNC reduces molecular oxygen to 2 water molecules using 4 electrons from cytochrome c in the IMS and 4 protons from the mitochondrial matrix. This chain is Cytochrome c oxidase subunit 3 (MT-CO3), found in Pan troglodytes (Chimpanzee).